A 247-amino-acid polypeptide reads, in one-letter code: MSVLPCSINTLKVLYDISGVEVGQHFYWQIGGFQVHAQVLITSWVVIAILLGSATIAVRNPQTIPTDGQNFFEYVLEFIRDLSKTQIGEEYGPWVPFIGTMFLFIFVSNWSGALLPWKIIQLPHGELAAPTNDINTTVALALLTSVAYFYAGLTKKGLGYFGKYIQPTPILLPINILEDFTKPLSLSFRLFGNILADELVVVVLVSLVPSVVPIPVMFLGLFTSGIQALIFATLAAAYIGESMEGHH.

5 consecutive transmembrane segments (helical) span residues 38–58 (QVLI…TIAV), 95–115 (VPFI…GALL), 134–154 (INTT…AGLT), 199–219 (LVVV…VMFL), and 220–240 (GLFT…AYIG).

Belongs to the ATPase A chain family. In terms of assembly, F-type ATPases have 2 components, CF(1) - the catalytic core - and CF(0) - the membrane proton channel. CF(1) has five subunits: alpha(3), beta(3), gamma(1), delta(1), epsilon(1). CF(0) has four main subunits: a, b, b' and c.

The protein resides in the plastid. It is found in the chloroplast thylakoid membrane. Key component of the proton channel; it plays a direct role in the translocation of protons across the membrane. The protein is ATP synthase subunit a, chloroplastic of Buxus microphylla (Littleleaf boxwood).